Here is a 169-residue protein sequence, read N- to C-terminus: Der GTPase-activating protein YihI (169 aa).

Disordered regions lie at residues 1-98 (MKPS…PQAE) and 144-169 (GLSY…LRGN). Basic residues predominate over residues 10–19 (SKGHAKARRK). Residues 20 to 30 (TREELDQEARD) show a composition bias toward basic and acidic residues. The segment covering 31–40 (RKRLKKRRGH) has biased composition (basic residues). A compositionally biased stretch (polar residues) spans 49 to 58 (GNTTSGSKGQ). A compositionally biased stretch (acidic residues) spans 147-159 (YDDDEEEEEDEKQ). Residues 160–169 (EDMMRLLRGN) show a composition bias toward basic and acidic residues.

This sequence belongs to the YihI family. As to quaternary structure, interacts with Der.

Functionally, a GTPase-activating protein (GAP) that modifies Der/EngA GTPase function. May play a role in ribosome biogenesis. This Escherichia coli O6:K15:H31 (strain 536 / UPEC) protein is Der GTPase-activating protein YihI.